The following is a 137-amino-acid chain: Small ribosomal subunit protein uS12 (137 aa).

The residue at position 102 (Asp-102) is a 3-methylthioaspartic acid.

It belongs to the universal ribosomal protein uS12 family. Part of the 30S ribosomal subunit. Contacts proteins S8 and S17. May interact with IF1 in the 30S initiation complex.

Its function is as follows. With S4 and S5 plays an important role in translational accuracy. In terms of biological role, interacts with and stabilizes bases of the 16S rRNA that are involved in tRNA selection in the A site and with the mRNA backbone. Located at the interface of the 30S and 50S subunits, it traverses the body of the 30S subunit contacting proteins on the other side and probably holding the rRNA structure together. The combined cluster of proteins S8, S12 and S17 appears to hold together the shoulder and platform of the 30S subunit. This Phytoplasma mali (strain AT) protein is Small ribosomal subunit protein uS12.